A 688-amino-acid chain; its full sequence is DNA ligase (688 aa).

Residues 42-46 (DAEYD), 91-92 (SL), and glutamate 128 contribute to the NAD(+) site. The N6-AMP-lysine intermediate role is filled by lysine 130. Arginine 151, glutamate 188, lysine 305, and lysine 329 together coordinate NAD(+). Zn(2+) is bound by residues cysteine 423, cysteine 426, cysteine 441, and cysteine 447. The BRCT domain occupies 608-688 (APQGVLAGKT…GMRKLLEGQL (81 aa)).

The protein belongs to the NAD-dependent DNA ligase family. LigA subfamily. Requires Mg(2+) as cofactor. Mn(2+) serves as cofactor.

The enzyme catalyses NAD(+) + (deoxyribonucleotide)n-3'-hydroxyl + 5'-phospho-(deoxyribonucleotide)m = (deoxyribonucleotide)n+m + AMP + beta-nicotinamide D-nucleotide.. Functionally, DNA ligase that catalyzes the formation of phosphodiester linkages between 5'-phosphoryl and 3'-hydroxyl groups in double-stranded DNA using NAD as a coenzyme and as the energy source for the reaction. It is essential for DNA replication and repair of damaged DNA. The polypeptide is DNA ligase (Paraburkholderia xenovorans (strain LB400)).